A 119-amino-acid polypeptide reads, in one-letter code: Large ribosomal subunit protein uL22 (119 aa).

The protein belongs to the universal ribosomal protein uL22 family. In terms of assembly, part of the 50S ribosomal subunit.

In terms of biological role, this protein binds specifically to 23S rRNA; its binding is stimulated by other ribosomal proteins, e.g. L4, L17, and L20. It is important during the early stages of 50S assembly. It makes multiple contacts with different domains of the 23S rRNA in the assembled 50S subunit and ribosome. Functionally, the globular domain of the protein is located near the polypeptide exit tunnel on the outside of the subunit, while an extended beta-hairpin is found that lines the wall of the exit tunnel in the center of the 70S ribosome. The chain is Large ribosomal subunit protein uL22 from Rickettsia canadensis (strain McKiel).